The following is a 347-amino-acid chain: Dihydroorotase (347 aa).

Residues His-14 and His-16 each coordinate Zn(2+). Substrate contacts are provided by residues 16-18 (HLR) and Asn-42. Zn(2+) contacts are provided by Lys-100, His-137, and His-175. Lys-100 carries the post-translational modification N6-carboxylysine. Residue His-137 participates in substrate binding. Leu-220 contributes to the substrate binding site. Asp-248 contributes to the Zn(2+) binding site. Residue Asp-248 is part of the active site. Substrate is bound by residues His-252 and Ala-264.

It belongs to the metallo-dependent hydrolases superfamily. DHOase family. Class II DHOase subfamily. In terms of assembly, homodimer. It depends on Zn(2+) as a cofactor.

It catalyses the reaction (S)-dihydroorotate + H2O = N-carbamoyl-L-aspartate + H(+). It participates in pyrimidine metabolism; UMP biosynthesis via de novo pathway; (S)-dihydroorotate from bicarbonate: step 3/3. Catalyzes the reversible cyclization of carbamoyl aspartate to dihydroorotate. This is Dihydroorotase from Pseudomonas savastanoi pv. phaseolicola (strain 1448A / Race 6) (Pseudomonas syringae pv. phaseolicola (strain 1448A / Race 6)).